The primary structure comprises 217 residues: Neuron-specific vesicular protein calcyon (217 aa).

Residues 1 to 25 (MVKLGCSFSGKPGKDPGDQDGAAMD) are disordered. At 1–87 (MVKLGCSFSG…EEGRRLPTAR (87 aa)) the chain is on the extracellular side. Asn73 is a glycosylation site (N-linked (GlcNAc...) asparagine). Residues 88–108 (MIAFAMALLGCVLIMYKAIWY) traverse the membrane as a helical segment. The Cytoplasmic portion of the chain corresponds to 109–217 (DQFTCPDGFL…AGSAAPPPAQ (109 aa)). Residues 162–217 (PAAWGDGYRAAKEERKGPTQAGAAAAATEPPGKPSAKAEKEAARKAAGSAAPPPAQ) form a disordered region.

The protein belongs to the NSG family. In terms of assembly, interacts with CLTA. In terms of processing, glycosylated. In terms of tissue distribution, expressed in the pyramidal cells of the prefrontal cortex, in hypothalamus and in caudate nucleus. No expression in spleen. Up-regulated in the prefrontal cortex of schizophrenic patients with nearly twice the levels of non-schizophrenics.

It is found in the cytoplasmic vesicle membrane. It localises to the cell membrane. In terms of biological role, interacts with clathrin light chain A and stimulates clathrin self-assembly and clathrin-mediated endocytosis. The protein is Neuron-specific vesicular protein calcyon (CALY) of Homo sapiens (Human).